The chain runs to 601 residues: Putative Lon protease homolog (601 aa).

Residues 363-560 (GEIVGQINGL…YQACELLFGR (198 aa)) form the Lon proteolytic domain. Catalysis depends on residues Ser455 and Lys498.

It belongs to the peptidase S16 family.

The chain is Putative Lon protease homolog from Haemophilus influenzae (strain ATCC 51907 / DSM 11121 / KW20 / Rd).